Consider the following 306-residue polypeptide: MSAFPPPPIPAPDASRVARVEPTPDVVRGILELGDRARADDGVAPFNEQTRLLLGTEDGPALLVVQGTDGRPIGAAVAARGDGGIEAEIVVDPARRRRGVGRALLDAVLAEAAGSPVSVWAHGDHPGARALAAATGLDRARELLQLRASVAEARTGLGERPMPAGLALSSFTADDADDWVALNARAFASHPEQGRMTRGDLDDRVAEPWFDPALLLLARDADGRLAGFHWLKVEGGQAEVYVLGVDPDRAARGLGSALLAAGLDLLAARGLDEVDLYVEADNAPALALYRRAAFRDAAVDVQYRRA.

N-acetyltransferase domains are found at residues 17 to 163 (VARV…RPMP) and 166 to 306 (LALS…YRRA). Residue Glu-48 coordinates 1D-myo-inositol 2-(L-cysteinylamino)-2-deoxy-alpha-D-glucopyranoside. 89 to 91 (IVV) serves as a coordination point for acetyl-CoA. The 1D-myo-inositol 2-(L-cysteinylamino)-2-deoxy-alpha-D-glucopyranoside site is built by Glu-192, Lys-232, and Glu-239. Residues 243–245 (LGV) and 250–256 (AARGLGS) each bind acetyl-CoA. Position 277 (Tyr-277) interacts with 1D-myo-inositol 2-(L-cysteinylamino)-2-deoxy-alpha-D-glucopyranoside.

Belongs to the acetyltransferase family. MshD subfamily. As to quaternary structure, monomer.

It carries out the reaction 1D-myo-inositol 2-(L-cysteinylamino)-2-deoxy-alpha-D-glucopyranoside + acetyl-CoA = mycothiol + CoA + H(+). Catalyzes the transfer of acetyl from acetyl-CoA to desacetylmycothiol (Cys-GlcN-Ins) to form mycothiol. This is Mycothiol acetyltransferase from Clavibacter michiganensis subsp. michiganensis (strain NCPPB 382).